An 863-amino-acid chain; its full sequence is Bifunctional uridylyltransferase/uridylyl-removing enzyme (863 aa).

Positions 1–328 are uridylyltransferase; it reads MLFSPTLSSL…SSNQDTVIDQ (328 aa). Residues 329 to 687 form a uridylyl-removing region; it reads LDDDFQLINQ…ISNRFSLGGT (359 aa). In terms of domain architecture, HD spans 446–568; that stretch reads VDEHTLRVML…MQNQVRLDYL (123 aa). ACT domains lie at 688-764 and 794-863; these read EVFI…KLPA and EMEL…QQIR.

It belongs to the GlnD family. It depends on Mg(2+) as a cofactor.

The catalysed reaction is [protein-PII]-L-tyrosine + UTP = [protein-PII]-uridylyl-L-tyrosine + diphosphate. The enzyme catalyses [protein-PII]-uridylyl-L-tyrosine + H2O = [protein-PII]-L-tyrosine + UMP + H(+). With respect to regulation, uridylyltransferase (UTase) activity is inhibited by glutamine, while glutamine activates uridylyl-removing (UR) activity. In terms of biological role, modifies, by uridylylation and deuridylylation, the PII regulatory proteins (GlnB and homologs), in response to the nitrogen status of the cell that GlnD senses through the glutamine level. Under low glutamine levels, catalyzes the conversion of the PII proteins and UTP to PII-UMP and PPi, while under higher glutamine levels, GlnD hydrolyzes PII-UMP to PII and UMP (deuridylylation). Thus, controls uridylylation state and activity of the PII proteins, and plays an important role in the regulation of nitrogen assimilation and metabolism. The chain is Bifunctional uridylyltransferase/uridylyl-removing enzyme from Haemophilus influenzae (strain ATCC 51907 / DSM 11121 / KW20 / Rd).